Consider the following 188-residue polypeptide: Heparin-binding hemagglutinin homolog (188 aa).

The segment at 162-188 (KAAAPARKAPAKKAPAKKAPAKKVTQK) is disordered. Residues 170–188 (APAKKAPAKKAPAKKVTQK) show a composition bias toward basic residues.

The protein to M.tuberculosis HbhA.

Its function is as follows. Might mediate adherence to host cells by binding sulfated glycoconjugates. This is Heparin-binding hemagglutinin homolog (hbhA) from Mycobacterium leprae (strain TN).